A 123-amino-acid polypeptide reads, in one-letter code: Protein Wnt-7b (123 aa).

S1 is lipidated: O-palmitoleoyl serine; by PORCN. The tract at residues 33–61 (VEVVRASRLRQPTFLKIKQIKSYQKPMET) is disordered linker. The cysteines at positions 89 and 104 are disulfide-linked. N90 carries N-linked (GlcNAc...) asparagine glycosylation.

Belongs to the Wnt family. Post-translationally, palmitoleoylation is required for efficient binding to frizzled receptors. Depalmitoleoylation leads to Wnt signaling pathway inhibition.

The protein resides in the secreted. It is found in the extracellular space. The protein localises to the extracellular matrix. Functionally, ligand for members of the frizzled family of seven transmembrane receptors that functions in the canonical Wnt/beta-catenin signaling pathway. Required for normal fusion of the chorion and the allantois during placenta development. Required for central nervous system (CNS) angiogenesis and blood-brain barrier regulation. The chain is Protein Wnt-7b (WNT7B) from Anser caerulescens (Snow goose).